The following is a 2055-amino-acid chain: Citron Rho-interacting kinase (2055 aa).

Met-1 is subject to N-acetylmethionine. Residues 97 to 359 (FEVRSLVGCG…FEGLCCHPFF (263 aa)) enclose the Protein kinase domain. Residues 103 to 111 (VGCGHFAEV) and Lys-126 each bind ATP. The active-site Proton acceptor is the Asp-221. Residues 360 to 430 (ARTDWNNIRN…SKALGYLGRS (71 aa)) enclose the AGC-kinase C-terminal domain. Ser-432, Ser-439, Ser-479, and Ser-581 each carry phosphoserine. Coiled coils occupy residues 441–1086 (AKVS…QWEA), 1091–1247 (LGDE…VLYS), and 1275–1325 (AKKK…RKAT). The segment at 1132-1328 (LAVKEHKAEI…AAHRKATDHP (197 aa)) is interaction with Rho/Rac. The residue at position 1237 (Tyr-1237) is a Phosphotyrosine. Over residues 1316-1329 (REEAAHRKATDHPH) the composition is skewed to basic and acidic residues. Disordered regions lie at residues 1316 to 1336 (REEAAHRKATDHPHPSTPATA) and 1348 to 1377 (SPEHQPSAMSLLAPPSSRRKESSTPEEFSR). Residues 1353-1363 (PSAMSLLAPPS) show a composition bias toward low complexity. Over residues 1365-1377 (RRKESSTPEEFSR) the composition is skewed to basic and acidic residues. Residues 1388-1437 (PHRFNVGLNMRATKCAVCLDTVHFGRQASKCLECQVMCHPKCSTCLPATC) form a Phorbol-ester/DAG-type zinc finger. Residues 1469–1589 (SLHLEGWMKV…WVTALESVVA (121 aa)) form the PH domain. Residues 1617 to 1907 (RLDMNCTLPF…RYLGPAISSG (291 aa)) form the CNH domain. At Lys-1747 the chain carries N6-acetyllysine. The interval 1932 to 2040 (SGTEQHRVPS…RGRLPAGAVR (109 aa)) is disordered. Residues 1939–1948 (VPSTSRSSPN) are compositionally biased toward polar residues. Ser-1966 carries the phosphoserine modification. Basic and acidic residues predominate over residues 1974–2031 (SHPREPSTPHRYRDREGRTELRRDKSPGRPLEREKSPGRMLSTRRERSPGRLFEDSSR). An SH3-binding motif is present at residues 1979–1984 (PSTPHR). Ser-2021 is subject to Phosphoserine. The residue at position 2041 (Thr-2041) is a Phosphothreonine.

Belongs to the protein kinase superfamily. AGC Ser/Thr protein kinase family. In terms of assembly, interacts with TTC3. Homodimer. Directly interacts with KIF14 depending on the activation state (stronger interaction with the kinase-dead form). As to expression, a major signal was observed in testis and brain, but it was also detected in thymus, spleen, kidney, heart and lung.

It localises to the cytoplasm. It carries out the reaction L-seryl-[protein] + ATP = O-phospho-L-seryl-[protein] + ADP + H(+). The enzyme catalyses L-threonyl-[protein] + ATP = O-phospho-L-threonyl-[protein] + ADP + H(+). In terms of biological role, plays a role in cytokinesis. Required for KIF14 localization to the central spindle and midbody. Probable RHO/RAC effector that binds to the GTP-bound forms of RHO and RAC1. It probably binds p21 with a tighter specificity in vivo. Displays serine/threonine protein kinase activity. Plays an important role in the regulation of cytokinesis and the development of the central nervous system. Phosphorylates MYL9/MLC2. The protein is Citron Rho-interacting kinase (Cit) of Mus musculus (Mouse).